The primary structure comprises 334 residues: Glyoxylate reductase (334 aa).

Residues 158–161 (FGRI), 180–182 (SRT), and 239–241 (IAR) contribute to the NADP(+) site. Catalysis depends on residues Arg-241 and Glu-270. Residue His-288 is the Proton donor of the active site. Residue 288 to 290 (HIG) coordinates NADP(+).

The protein belongs to the D-isomer specific 2-hydroxyacid dehydrogenase family. GyaR subfamily. Homodimer.

The protein resides in the cytoplasm. The catalysed reaction is glycolate + NAD(+) = glyoxylate + NADH + H(+). This Thermococcus onnurineus (strain NA1) protein is Glyoxylate reductase.